The sequence spans 313 residues: Homoserine O-succinyltransferase (313 aa).

The Acyl-thioester intermediate role is filled by C142. Substrate is bound by residues K163 and S192. H235 (proton acceptor) is an active-site residue. Residue E237 is part of the active site. Position 249 (R249) interacts with substrate.

Belongs to the MetA family.

The protein resides in the cytoplasm. The enzyme catalyses L-homoserine + succinyl-CoA = O-succinyl-L-homoserine + CoA. It functions in the pathway amino-acid biosynthesis; L-methionine biosynthesis via de novo pathway; O-succinyl-L-homoserine from L-homoserine: step 1/1. Functionally, transfers a succinyl group from succinyl-CoA to L-homoserine, forming succinyl-L-homoserine. The chain is Homoserine O-succinyltransferase from Shewanella oneidensis (strain ATCC 700550 / JCM 31522 / CIP 106686 / LMG 19005 / NCIMB 14063 / MR-1).